A 494-amino-acid chain; its full sequence is 3-octaprenyl-4-hydroxybenzoate carboxy-lyase (494 aa).

Asn172 serves as a coordination point for Mn(2+). Prenylated FMN contacts are provided by residues 175–177 (IYR), 189–191 (RWL), and 194–195 (RG). Residue Glu238 participates in Mn(2+) binding. The Proton donor role is filled by Asp287.

This sequence belongs to the UbiD family. As to quaternary structure, homohexamer. The cofactor is prenylated FMN. Mn(2+) serves as cofactor.

Its subcellular location is the cell membrane. The enzyme catalyses a 4-hydroxy-3-(all-trans-polyprenyl)benzoate + H(+) = a 2-(all-trans-polyprenyl)phenol + CO2. The protein operates within cofactor biosynthesis; ubiquinone biosynthesis. Its function is as follows. Catalyzes the decarboxylation of 3-octaprenyl-4-hydroxy benzoate to 2-octaprenylphenol, an intermediate step in ubiquinone biosynthesis. This is 3-octaprenyl-4-hydroxybenzoate carboxy-lyase from Erwinia tasmaniensis (strain DSM 17950 / CFBP 7177 / CIP 109463 / NCPPB 4357 / Et1/99).